We begin with the raw amino-acid sequence, 358 residues long: Src kinase-associated phosphoprotein 2 (358 aa).

Ser6 and Ser9 each carry phosphoserine. The interval 60-108 (PQEFQDKGDAEEGDEYDDPFAGPPDTISLASERYDKDDDGPSDGNQFPP) is disordered. Position 75 is a phosphotyrosine (Tyr75). A phosphoserine mark is found at Ser87 and Ser90. In terms of domain architecture, PH spans 116 to 219 (FVIKAGYLEK…WVQQLKFILQ (104 aa)). Residues Tyr151 and Tyr197 each carry the phosphotyrosine modification. Ser223 is subject to Phosphoserine. The tract at residues 227 to 293 (PEDEDEKGDL…DSVQHPSGDK (67 aa)) is disordered. Over residues 243–253 (PVPVSSPQRSQ) the composition is skewed to low complexity. A compositionally biased stretch (acidic residues) spans 255–270 (IDDEIYEELPEEEEDT). Tyr260 bears the Phosphotyrosine mark. Phosphoserine is present on residues Ser272, Ser282, and Ser285. Over residues 274–293 (KMDEQGKGSRDSVQHPSGDK) the composition is skewed to basic and acidic residues. Residues 296–357 (DYANFYQGLW…PKAYLMEMYD (62 aa)) enclose the SH3 domain.

The protein belongs to the SKAP family. As to quaternary structure, interacts with FYB1, which is required for SKAP2 protein stability. Interacts with PTPNS1. Part of a complex consisting of SKAP2, FYB1 and PTPNS1. Part of a complex consisting of SKAP2, FYB1 and LILRB3. Interacts with LAT, GRB2, PTK2B, and PRAM1. May interact with actin. May interact with FYN, HCK and LYN. Interacts with FASLG.

The protein resides in the cytoplasm. Functionally, may be involved in B-cell and macrophage adhesion processes. In B-cells, may act by coupling the B-cell receptor (BCR) to integrin activation. May play a role in src signaling pathway. In Rattus norvegicus (Rat), this protein is Src kinase-associated phosphoprotein 2 (Skap2).